The following is a 138-amino-acid chain: ATP synthase epsilon chain (138 aa).

This sequence belongs to the ATPase epsilon chain family. In terms of assembly, F-type ATPases have 2 components, CF(1) - the catalytic core - and CF(0) - the membrane proton channel. CF(1) has five subunits: alpha(3), beta(3), gamma(1), delta(1), epsilon(1). CF(0) has three main subunits: a, b and c.

The protein localises to the cell inner membrane. In terms of biological role, produces ATP from ADP in the presence of a proton gradient across the membrane. This Cupriavidus pinatubonensis (strain JMP 134 / LMG 1197) (Cupriavidus necator (strain JMP 134)) protein is ATP synthase epsilon chain.